Here is a 476-residue protein sequence, read N- to C-terminus: Transcription factor HBP-1b(c1) (476 aa).

Disordered regions lie at residues 1–29 (ESRRGGGGPAAAAAAAGDPRGPMPGFGAP), 133–159 (HNNDNWGESSMADTSPRTDTSTDPDID), and 171–207 (QLAAPTASDSSDKSRDKLDHKSLRRLAQNREAARKSR). A compositionally biased stretch (low complexity) spans 10–25 (AAAAAAAGDPRGPMPG). Positions 135–144 (NDNWGESSMA) are enriched in polar residues. The segment covering 180-191 (SSDKSRDKLDHK) has biased composition (basic and acidic residues). The 64-residue stretch at 189 to 252 (DHKSLRRLAQ…SSGDQSQSAS (64 aa)) folds into the bZIP domain. The interval 191–211 (KSLRRLAQNREAARKSRLRKK) is basic motif. The stretch at 201-242 (EAARKSRLRKKAYIQNLESSRLKLTQLEQELQRARQQGIFIS) forms a coiled coil. The interval 217 to 231 (LESSRLKLTQLEQEL) is leucine-zipper. In terms of domain architecture, DOG1 spans 256 to 473 (AVAFDMEYAR…RALSSLWLAR (218 aa)).

This sequence belongs to the bZIP family. Binds DNA as a dimer.

Its subcellular location is the nucleus. In terms of biological role, transcriptional activator that binds specifically to the DNA sequence 5'-TGACG-3'. Recognizes ocs elements like the as-1 motif of the cauliflower mosaic virus 35S promoter. Binding to the as-1-like cis elements mediate auxin- and salicylic acid-inducible transcription. Binds to the hexamer motif 5'-ACGTCA-3' of histone gene promoters. The polypeptide is Transcription factor HBP-1b(c1) (Triticum aestivum (Wheat)).